The sequence spans 366 residues: Aminomethyltransferase (366 aa).

The protein belongs to the GcvT family. The glycine cleavage system is composed of four proteins: P, T, L and H.

The enzyme catalyses N(6)-[(R)-S(8)-aminomethyldihydrolipoyl]-L-lysyl-[protein] + (6S)-5,6,7,8-tetrahydrofolate = N(6)-[(R)-dihydrolipoyl]-L-lysyl-[protein] + (6R)-5,10-methylene-5,6,7,8-tetrahydrofolate + NH4(+). Its function is as follows. The glycine cleavage system catalyzes the degradation of glycine. In Bacillus cereus (strain 03BB102), this protein is Aminomethyltransferase.